The primary structure comprises 270 residues: Formamidopyrimidine-DNA glycosylase (270 aa).

Proline 2 functions as the Schiff-base intermediate with DNA in the catalytic mechanism. The active-site Proton donor is glutamate 3. Residue lysine 58 is the Proton donor; for beta-elimination activity of the active site. Positions 91, 110, and 151 each coordinate DNA. The segment at 236–270 adopts an FPG-type zinc-finger fold; sequence LVYGRDGLPCPNCGRALKHATIGQRASVWCSHCQR. Catalysis depends on arginine 260, which acts as the Proton donor; for delta-elimination activity.

It belongs to the FPG family. In terms of assembly, monomer. Requires Zn(2+) as cofactor.

It carries out the reaction Hydrolysis of DNA containing ring-opened 7-methylguanine residues, releasing 2,6-diamino-4-hydroxy-5-(N-methyl)formamidopyrimidine.. It catalyses the reaction 2'-deoxyribonucleotide-(2'-deoxyribose 5'-phosphate)-2'-deoxyribonucleotide-DNA = a 3'-end 2'-deoxyribonucleotide-(2,3-dehydro-2,3-deoxyribose 5'-phosphate)-DNA + a 5'-end 5'-phospho-2'-deoxyribonucleoside-DNA + H(+). Involved in base excision repair of DNA damaged by oxidation or by mutagenic agents. Acts as a DNA glycosylase that recognizes and removes damaged bases. Has a preference for oxidized purines, such as 7,8-dihydro-8-oxoguanine (8-oxoG). Has AP (apurinic/apyrimidinic) lyase activity and introduces nicks in the DNA strand. Cleaves the DNA backbone by beta-delta elimination to generate a single-strand break at the site of the removed base with both 3'- and 5'-phosphates. This is Formamidopyrimidine-DNA glycosylase from Stenotrophomonas maltophilia (strain K279a).